Consider the following 210-residue polypeptide: Thiamine-phosphate synthase (210 aa).

4-amino-2-methyl-5-(diphosphooxymethyl)pyrimidine is bound by residues 39-43 (QLREK) and Asn71. Positions 72 and 91 each coordinate Mg(2+). Ser110 is a 4-amino-2-methyl-5-(diphosphooxymethyl)pyrimidine binding site. 134-136 (TPT) is a binding site for 2-[(2R,5Z)-2-carboxy-4-methylthiazol-5(2H)-ylidene]ethyl phosphate. Residue Lys137 coordinates 4-amino-2-methyl-5-(diphosphooxymethyl)pyrimidine. Gly163 serves as a coordination point for 2-[(2R,5Z)-2-carboxy-4-methylthiazol-5(2H)-ylidene]ethyl phosphate.

It belongs to the thiamine-phosphate synthase family. Requires Mg(2+) as cofactor.

It carries out the reaction 2-[(2R,5Z)-2-carboxy-4-methylthiazol-5(2H)-ylidene]ethyl phosphate + 4-amino-2-methyl-5-(diphosphooxymethyl)pyrimidine + 2 H(+) = thiamine phosphate + CO2 + diphosphate. It catalyses the reaction 2-(2-carboxy-4-methylthiazol-5-yl)ethyl phosphate + 4-amino-2-methyl-5-(diphosphooxymethyl)pyrimidine + 2 H(+) = thiamine phosphate + CO2 + diphosphate. The catalysed reaction is 4-methyl-5-(2-phosphooxyethyl)-thiazole + 4-amino-2-methyl-5-(diphosphooxymethyl)pyrimidine + H(+) = thiamine phosphate + diphosphate. It functions in the pathway cofactor biosynthesis; thiamine diphosphate biosynthesis; thiamine phosphate from 4-amino-2-methyl-5-diphosphomethylpyrimidine and 4-methyl-5-(2-phosphoethyl)-thiazole: step 1/1. Functionally, condenses 4-methyl-5-(beta-hydroxyethyl)thiazole monophosphate (THZ-P) and 2-methyl-4-amino-5-hydroxymethyl pyrimidine pyrophosphate (HMP-PP) to form thiamine monophosphate (TMP). This chain is Thiamine-phosphate synthase, found in Campylobacter jejuni subsp. jejuni serotype O:6 (strain 81116 / NCTC 11828).